A 542-amino-acid polypeptide reads, in one-letter code: Probable spastin homolog spas-1 (542 aa).

A coiled-coil region spans residues 29 to 66 (RAAIEMDELTKQNGTINEKLQTAELYKQARQMLKEANE). The disordered stretch occupies residues 131–177 (ATVPGDKKVSKVKQTEKAPHVCSRGDRCGAHQPPPEKKSTPLKPVNQ). Positions 135–169 (GDKKVSKVKQTEKAPHVCSRGDRCGAHQPPPEKKS) are enriched in basic and acidic residues. Residue 309–316 (GPPGNGKT) participates in ATP binding.

This sequence belongs to the AAA ATPase family. Spastin subfamily. Homohexamer. The homohexamer is stabilized by ATP-binding. The homohexamer may adopt a ring conformation through which microtubules pass prior to being severed. Interacts with microtubules.

It is found in the cytoplasm. Its subcellular location is the cytoskeleton. The protein resides in the perinuclear region. It carries out the reaction n ATP + n H2O + a microtubule = n ADP + n phosphate + (n+1) alpha/beta tubulin heterodimers.. In terms of biological role, severs microtubules, probably in an ATP-dependent fashion. The protein is Probable spastin homolog spas-1 (spas-1) of Caenorhabditis briggsae.